The sequence spans 495 residues: Cytochrome P450 2E1 (495 aa).

Residue 298 to 303 (FAGTET) participates in substrate binding. Heme is bound at residue C437.

The protein belongs to the cytochrome P450 family. In terms of assembly, interacts with chaperones HSP70 and HSP90; this interaction is required for initial targeting to mitochondria. Requires heme as cofactor.

Its subcellular location is the endoplasmic reticulum membrane. It is found in the microsome membrane. The protein localises to the mitochondrion inner membrane. The enzyme catalyses an organic molecule + reduced [NADPH--hemoprotein reductase] + O2 = an alcohol + oxidized [NADPH--hemoprotein reductase] + H2O + H(+). It carries out the reaction (5Z,8Z,11Z)-eicosatrienoate + reduced [NADPH--hemoprotein reductase] + O2 = 19-hydroxy-(5Z,8Z,11Z)-eicosatrienoate + oxidized [NADPH--hemoprotein reductase] + H2O + H(+). It catalyses the reaction (5Z,8Z,11Z,14Z,17Z)-eicosapentaenoate + reduced [NADPH--hemoprotein reductase] + O2 = 19-hydroxy-(5Z,8Z,11Z,14Z,17Z)-eicosapentaenoate + oxidized [NADPH--hemoprotein reductase] + H2O + H(+). The catalysed reaction is (4Z,7Z,10Z,13Z,16Z,19Z)-docosahexaenoate + reduced [NADPH--hemoprotein reductase] + O2 = 21-hydroxy-(4Z,7Z,10Z,13Z,16Z,19Z)-docosahexaenoate + oxidized [NADPH--hemoprotein reductase] + H2O + H(+). The enzyme catalyses dodecanoate + reduced [NADPH--hemoprotein reductase] + O2 = 11-hydroxydodecanoate + oxidized [NADPH--hemoprotein reductase] + H2O + H(+). It carries out the reaction tetradecanoate + reduced [NADPH--hemoprotein reductase] + O2 = 13-hydroxytetradecanoate + oxidized [NADPH--hemoprotein reductase] + H2O + H(+). It catalyses the reaction 4-nitrophenol + NADPH + O2 + H(+) = 4-nitrocatechol + NADP(+) + H2O. The protein operates within lipid metabolism; fatty acid metabolism. With respect to regulation, the omega-1 hydroxylase activity is stimulated by cytochrome b5. Functionally, a cytochrome P450 monooxygenase involved in the metabolism of fatty acids. Mechanistically, uses molecular oxygen inserting one oxygen atom into a substrate, and reducing the second into a water molecule, with two electrons provided by NADPH via cytochrome P450 reductase (NADPH--hemoprotein reductase). Catalyzes the hydroxylation of carbon-hydrogen bonds. Hydroxylates fatty acids specifically at the omega-1 position displaying the highest catalytic activity for saturated fatty acids. May be involved in the oxidative metabolism of xenobiotics. The protein is Cytochrome P450 2E1 (CYP2E1) of Sus scrofa (Pig).